Here is a 50-residue protein sequence, read N- to C-terminus: Putative protein HokG (50 aa).

A helical membrane pass occupies residues Y5 to G25.

It belongs to the Hok/Gef family.

Its subcellular location is the cell inner membrane. Toxic component of a type I toxin-antitoxin (TA) system. When overexpressed kills cells within minutes; causes collapse of the transmembrane potential and arrest of respiration. Its toxic effect is probably neutralized by an antisense antitoxin Sok RNA. This Escherichia coli O157:H7 protein is Putative protein HokG (hokG).